We begin with the raw amino-acid sequence, 256 residues long: Small ribosomal subunit protein eS1 (256 aa).

The residue at position 2 (Ala2) is an N-acetylalanine; partial.

It belongs to the eukaryotic ribosomal protein eS1 family. In terms of assembly, component of the small ribosomal subunit. Mature ribosomes consist of a small (40S) and a large (60S) subunit. The 40S subunit contains about 33 different proteins and 1 molecule of RNA (18S). The 60S subunit contains about 49 different proteins and 3 molecules of RNA (25S, 5.8S and 5S).

Its subcellular location is the cytoplasm. This chain is Small ribosomal subunit protein eS1, found in Meyerozyma guilliermondii (strain ATCC 6260 / CBS 566 / DSM 6381 / JCM 1539 / NBRC 10279 / NRRL Y-324) (Yeast).